The primary structure comprises 381 residues: Homoserine O-succinyltransferase (381 aa).

Residues asparagine 45 to aspartate 360 enclose the AB hydrolase-1 domain. Serine 151 functions as the Nucleophile in the catalytic mechanism. Arginine 221 lines the substrate pocket. Catalysis depends on residues aspartate 321 and histidine 354. Aspartate 355 provides a ligand contact to substrate.

Belongs to the AB hydrolase superfamily. MetX family. In terms of assembly, homodimer.

The protein localises to the cytoplasm. The catalysed reaction is L-homoserine + succinyl-CoA = O-succinyl-L-homoserine + CoA. It participates in amino-acid biosynthesis; L-methionine biosynthesis via de novo pathway; O-succinyl-L-homoserine from L-homoserine: step 1/1. In terms of biological role, transfers a succinyl group from succinyl-CoA to L-homoserine, forming succinyl-L-homoserine. The polypeptide is Homoserine O-succinyltransferase (Burkholderia thailandensis (strain ATCC 700388 / DSM 13276 / CCUG 48851 / CIP 106301 / E264)).